The sequence spans 477 residues: ATP synthase subunit beta (477 aa).

An ATP-binding site is contributed by glycine 148 to threonine 155.

It belongs to the ATPase alpha/beta chains family. In terms of assembly, F-type ATPases have 2 components, CF(1) - the catalytic core - and CF(0) - the membrane proton channel. CF(1) has five subunits: alpha(3), beta(3), gamma(1), delta(1), epsilon(1). CF(0) has three main subunits: a(1), b(2) and c(9-12). The alpha and beta chains form an alternating ring which encloses part of the gamma chain. CF(1) is attached to CF(0) by a central stalk formed by the gamma and epsilon chains, while a peripheral stalk is formed by the delta and b chains.

It is found in the cell inner membrane. It carries out the reaction ATP + H2O + 4 H(+)(in) = ADP + phosphate + 5 H(+)(out). Produces ATP from ADP in the presence of a proton gradient across the membrane. The catalytic sites are hosted primarily by the beta subunits. The sequence is that of ATP synthase subunit beta from Psychrobacter arcticus (strain DSM 17307 / VKM B-2377 / 273-4).